The sequence spans 168 residues: Peptide deformylase (168 aa).

Fe cation is bound by residues C92 and H134. Residue E135 is part of the active site. Residue H138 coordinates Fe cation.

The protein belongs to the polypeptide deformylase family. Fe(2+) serves as cofactor.

The enzyme catalyses N-terminal N-formyl-L-methionyl-[peptide] + H2O = N-terminal L-methionyl-[peptide] + formate. Removes the formyl group from the N-terminal Met of newly synthesized proteins. Requires at least a dipeptide for an efficient rate of reaction. N-terminal L-methionine is a prerequisite for activity but the enzyme has broad specificity at other positions. This Stutzerimonas stutzeri (strain A1501) (Pseudomonas stutzeri) protein is Peptide deformylase.